The following is a 145-amino-acid chain: Cystatin-F (145 aa).

An N-terminal signal peptide occupies residues 1–19; that stretch reads MRAAGTLLAFCCLVLSTTG. N62 is a glycosylation site (N-linked (GlcNAc...) asparagine). A Secondary area of contact motif is present at residues 81-85; sequence QIVKG. A disulfide bridge connects residues C99 and C110. N115 carries an N-linked (GlcNAc...) asparagine glycan. C124 and C144 are disulfide-bonded.

Belongs to the cystatin family. As to quaternary structure, homodimer; disulfide-linked. In terms of tissue distribution, primarily expressed in peripheral blood cells and spleen.

It is found in the secreted. The protein localises to the cytoplasm. In terms of biological role, inhibits papain and cathepsin L but with affinities lower than other cystatins. May play a role in immune regulation through inhibition of a unique target in the hematopoietic system. The sequence is that of Cystatin-F (CST7) from Homo sapiens (Human).